Consider the following 238-residue polypeptide: Serine protease SplE (238 aa).

Positions 1–36 are cleaved as a signal peptide; sequence MNKNIIIKSIAALTILTSVTGVGTTVVEGIQQTAKA. Catalysis depends on charge relay system residues His-75, Asp-113, and Ser-191.

Belongs to the peptidase S1B family.

It is found in the secreted. This is Serine protease SplE (splE) from Staphylococcus aureus (strain USA300).